The primary structure comprises 357 residues: uncharacterized protein (357 aa).

Residues 27–196 (LVCEGGGQRG…SDAIPVKEAA (170 aa)) enclose the PNPLA domain. The GXGXXG signature appears at 31–36 (GGGQRG). Residues 59 to 63 (GTSAG) carry the GXSXG motif. Serine 61 serves as the catalytic Nucleophile. Residue aspartate 183 is the Proton acceptor of the active site. The DGA/G motif lies at 183–185 (DGG).

Its function is as follows. Probable lipid hydrolase. This is an uncharacterized protein from Escherichia coli (strain K12).